The primary structure comprises 269 residues: Hydroxyethylthiazole kinase (269 aa).

Residue M46 coordinates substrate. ATP is bound by residues R122 and T168. Residue G195 participates in substrate binding.

The protein belongs to the Thz kinase family. Requires Mg(2+) as cofactor.

It catalyses the reaction 5-(2-hydroxyethyl)-4-methylthiazole + ATP = 4-methyl-5-(2-phosphooxyethyl)-thiazole + ADP + H(+). It participates in cofactor biosynthesis; thiamine diphosphate biosynthesis; 4-methyl-5-(2-phosphoethyl)-thiazole from 5-(2-hydroxyethyl)-4-methylthiazole: step 1/1. Catalyzes the phosphorylation of the hydroxyl group of 4-methyl-5-beta-hydroxyethylthiazole (THZ). This is Hydroxyethylthiazole kinase from Geobacillus thermodenitrificans (strain NG80-2).